Here is a 155-residue protein sequence, read N- to C-terminus: CASP-like protein 5B2 (155 aa).

Residues 1-18 are Cytoplasmic-facing; that stretch reads MWEVAWWRPGTWGGLAMR. Residues 19 to 39 form a helical membrane-spanning segment; the sequence is VGQVAFAGASIGVMASGAGFA. N-linked (GlcNAc...) asparagine glycosylation is present at N40. The Extracellular segment spans residues 40-43; that stretch reads NYTA. The chain crosses the membrane as a helical span at residues 44-64; that stretch reads FCYLIASMGLQSLWSLGLACL. Topologically, residues 65-77 are cytoplasmic; that stretch reads DVYALTVKRDLNN. Residues 78–98 form a helical membrane-spanning segment; it reads ALLVSLFVIGDWVTALLSFAA. Residues 99 to 128 lie on the Extracellular side of the membrane; that stretch reads SCSAGGVMVLFKRDVLFCRRYPQLPCGRFE. The chain crosses the membrane as a helical span at residues 129 to 149; that stretch reads LAVALAFLSWALSATSAIIMF. Residues 150 to 155 lie on the Cytoplasmic side of the membrane; the sequence is CLLAAF.

Belongs to the Casparian strip membrane proteins (CASP) family. In terms of assembly, homodimer and heterodimers.

Its subcellular location is the cell membrane. This chain is CASP-like protein 5B2, found in Oryza sativa subsp. indica (Rice).